A 366-amino-acid polypeptide reads, in one-letter code: Chorismate synthase (366 aa).

Residues Arg-48 and Arg-54 each contribute to the NADP(+) site. FMN contacts are provided by residues 125-127, 238-239, Gly-278, 293-297, and Arg-319; these read RSS, NA, and KPTSS.

The protein belongs to the chorismate synthase family. Homotetramer. The cofactor is FMNH2.

The catalysed reaction is 5-O-(1-carboxyvinyl)-3-phosphoshikimate = chorismate + phosphate. It functions in the pathway metabolic intermediate biosynthesis; chorismate biosynthesis; chorismate from D-erythrose 4-phosphate and phosphoenolpyruvate: step 7/7. Its function is as follows. Catalyzes the anti-1,4-elimination of the C-3 phosphate and the C-6 proR hydrogen from 5-enolpyruvylshikimate-3-phosphate (EPSP) to yield chorismate, which is the branch point compound that serves as the starting substrate for the three terminal pathways of aromatic amino acid biosynthesis. This reaction introduces a second double bond into the aromatic ring system. The polypeptide is Chorismate synthase (Burkholderia orbicola (strain MC0-3)).